We begin with the raw amino-acid sequence, 274 residues long: MSYGPLDMYRNPGPSGPQPRDFNSIIQTCSGNIQRISQATAQIKNLMSQLGTKQDSSKLQENLQQLQHSTNQLAKETNELLKELGSLPLPLSASEQRQQKLQKERLMNDFSSALNNFQVVQRKVSEKEKESIARARAGSRLSAEDRQREEQLVSFDSHEEWNQMQSQEEEAAITEQDLELIKERETAIRQLEADILDVNQIFKDLAMMIHDQGDLIDSIEANVESSEVHVERATDQLQRAAYYQKKSRKKMCILVLVLSVIVTVLVVVIWVASK.

2 disordered regions span residues 1–20 (MSYG…PQPR) and 128–147 (EKES…EDRQ). Residue serine 2 is modified to N-acetylserine. Over 2–250 (SYGPLDMYRN…AYYQKKSRKK (249 aa)) the chain is Cytoplasmic. Residues 33-130 (IQRISQATAQ…QRKVSEKEKE (98 aa)) are a coiled coil. A phosphoserine mark is found at serine 139, serine 142, serine 218, and serine 225. One can recognise a t-SNARE coiled-coil homology domain in the interval 178–240 (LELIKERETA…ERATDQLQRA (63 aa)). A helical; Anchor for type IV membrane protein transmembrane segment spans residues 251 to 271 (MCILVLVLSVIVTVLVVVIWV). Residues 272 to 274 (ASK) lie on the Vesicular side of the membrane.

Belongs to the syntaxin family. As to quaternary structure, associates with the BLOC-1 complex. Interacts with BLOC1S6. Interacts with NAPA and SNAP23. Identified in a complex containing STX6, STX12, VAMP4 and VTI1A. Interacts with GRIPAP1. Forms a complex with GRIP1, GRIA2 and NSG1; controls the intracellular fate of AMPAR and the endosomal sorting of the GRIA2 subunit toward recycling and membrane targeting. Interacts with NSG1. Interacts with TPC1. Interacts (via N-terminus) with VPS13B.

The protein localises to the endosome membrane. The protein resides in the golgi apparatus membrane. It localises to the endomembrane system. It is found in the early endosome membrane. Its subcellular location is the recycling endosome membrane. Functionally, SNARE promoting fusion of transport vesicles with target membranes. Together with SNARE STX6, promotes movement of vesicles from endosomes to the cell membrane, and may therefore function in the endocytic recycling pathway. Through complex formation with GRIP1, GRIA2 and NSG1 controls the intracellular fate of AMPAR and the endosomal sorting of the GRIA2 subunit toward recycling and membrane targeting. The chain is Syntaxin-12 (Stx12) from Mus musculus (Mouse).